The sequence spans 225 residues: Transcription factor MYB1 (225 aa).

2 consecutive HTH myb-type domains span residues 11-67 (LGRV…KPSI) and 68-118 (KRGH…YKKH). DNA-binding regions (H-T-H motif) lie at residues 39-63 (WKRV…LNYL) and 91-114 (WSLI…NTHL).

No interactions with bHLH.

It is found in the nucleus. Its function is as follows. Activates DODA1 and CYP76AD1 in the betalain red pigment pathway. This Beta vulgaris (Sugar beet) protein is Transcription factor MYB1.